The primary structure comprises 596 residues: Mitoguardin 2 (596 aa).

Transmembrane regions (helical) follow at residues 11 to 31 (IMQA…STFG) and 40 to 60 (LSPS…ALAL). 2 disordered regions span residues 67–158 (RRGR…AAWE) and 576–596 (ALPK…GQQD). Over residues 110–123 (MSPSTRSNDTLSGV) the composition is skewed to polar residues. The segment covering 124-140 (SSIAQSKHSSSSHSIAS) has biased composition (low complexity). 2 stretches are compositionally biased toward polar residues: residues 143-152 (VPSSPNQSVN) and 583-596 (QAES…GQQD).

The protein belongs to the mitoguardin family. As to quaternary structure, homodimer and heterodimer; forms heterodimers with miga1.

The protein resides in the mitochondrion outer membrane. Regulator of mitochondrial fusion: acts by forming homo- and heterodimers at the mitochondrial outer membrane and facilitating the formation of pld6/MitoPLD dimers. May act by regulating phospholipid metabolism via pld6/MitoPLD. In Danio rerio (Zebrafish), this protein is Mitoguardin 2.